We begin with the raw amino-acid sequence, 954 residues long: MTELLQSLNTQHEFVGRHNGPNHADQQKMLSTINAESLDALIAQTVPAQIRLEKPMQLAEAQSEADMLASIKKFADLNQVKRTFIGQGYYNTFTPNVILRNVLENPGWYTAYTPYQPEISQGRLESLLNYQQMVMDLTGMDIANASLLDEATAAAEAMTLCQRAGKSKSKVFFVADDVHPQTIEVIKTRAKYFGFDVVIGNVDSLPQTEAFGALLQYPSTTGEVRDLTDVITQAQANKTLVSVATDLLASALVKPAGEMGADVVIGSAQRFGVPMGYGGPHAAFMATREQHKRTMPGRVIGVSIDAKGNQALRMAMQTREQHIRREKATSNICTAQALLANMASFFAVYHGEVGIRTIARRTHHMTAILAAGLTKSGYELAHNAFFDTITINTGDNTQALYAKAQAADINLRLLDGQIGISFDETTTVADIDALFAIFDVKESVNALSTDIAGNEFAAIPEACRRTSRFLTHPVFNTHHSETQMMRYLKQLENKDFSLTHGMIPLGSCTMKLNAAAEMIPVTWPEFGALHPFAPIEQAAGYTALAEDLKAKLCEITGYDAFSLQPNSGASGEYAGLIAIQRYHESRGEGHRNVCLIPSSAHGTNPATAAMVSMKVVVVKCDENGNIDLVDLAAKIEKHQENLSSIMITYPSTHGVYEEQVKEVCEMVHAAGGQVYLDGANMNAQVGLTSPGFIGSDVSHLNLHKTFCIPHGGGGPGMGPIGVKSHLAPFLPGHIENGVEGKEFAVSAADLGSASILPISWAYIAMMGADGLTEATKVAILNANYVMERLRPHYPVLYRGTNGRVAHECIIDIRPLKEETGISEEDIAKRLMDYGFHAPTMSFPVAGTLMVEPTESEDLEELDRFCDAMIAIREEMTKVKNGEWPLENNPLVNAPHTQVDLMEEQWDRPYPREIACFPSAATKRSKYWPTVNRVDNVYGDRNLVCSCPGIENYEE.

Position 704 is an N6-(pyridoxal phosphate)lysine (Lys704).

This sequence belongs to the GcvP family. In terms of assembly, the glycine cleavage system is composed of four proteins: P, T, L and H. It depends on pyridoxal 5'-phosphate as a cofactor.

The enzyme catalyses N(6)-[(R)-lipoyl]-L-lysyl-[glycine-cleavage complex H protein] + glycine + H(+) = N(6)-[(R)-S(8)-aminomethyldihydrolipoyl]-L-lysyl-[glycine-cleavage complex H protein] + CO2. Its function is as follows. The glycine cleavage system catalyzes the degradation of glycine. The P protein binds the alpha-amino group of glycine through its pyridoxal phosphate cofactor; CO(2) is released and the remaining methylamine moiety is then transferred to the lipoamide cofactor of the H protein. The polypeptide is Glycine dehydrogenase (decarboxylating) (Vibrio vulnificus (strain CMCP6)).